The primary structure comprises 462 residues: ATP synthase subunit beta (462 aa).

152-159 (GGAGVGKT) is a binding site for ATP.

This sequence belongs to the ATPase alpha/beta chains family. In terms of assembly, F-type ATPases have 2 components, CF(1) - the catalytic core - and CF(0) - the membrane proton channel. CF(1) has five subunits: alpha(3), beta(3), gamma(1), delta(1), epsilon(1). CF(0) has three main subunits: a(1), b(2) and c(9-12). The alpha and beta chains form an alternating ring which encloses part of the gamma chain. CF(1) is attached to CF(0) by a central stalk formed by the gamma and epsilon chains, while a peripheral stalk is formed by the delta and b chains.

It is found in the cell inner membrane. The enzyme catalyses ATP + H2O + 4 H(+)(in) = ADP + phosphate + 5 H(+)(out). Its function is as follows. Produces ATP from ADP in the presence of a proton gradient across the membrane. The catalytic sites are hosted primarily by the beta subunits. The polypeptide is ATP synthase subunit beta (Blochmanniella pennsylvanica (strain BPEN)).